Reading from the N-terminus, the 403-residue chain is Chorismate synthase (403 aa).

NADP(+)-binding residues include R40 and R46. Residues 140–142 (RSS), 261–262 (QA), G305, 320–324 (KPIST), and R346 each bind FMN.

This sequence belongs to the chorismate synthase family. As to quaternary structure, homotetramer. FMNH2 is required as a cofactor.

It catalyses the reaction 5-O-(1-carboxyvinyl)-3-phosphoshikimate = chorismate + phosphate. The protein operates within metabolic intermediate biosynthesis; chorismate biosynthesis; chorismate from D-erythrose 4-phosphate and phosphoenolpyruvate: step 7/7. Functionally, catalyzes the anti-1,4-elimination of the C-3 phosphate and the C-6 proR hydrogen from 5-enolpyruvylshikimate-3-phosphate (EPSP) to yield chorismate, which is the branch point compound that serves as the starting substrate for the three terminal pathways of aromatic amino acid biosynthesis. This reaction introduces a second double bond into the aromatic ring system. This is Chorismate synthase from Corynebacterium diphtheriae (strain ATCC 700971 / NCTC 13129 / Biotype gravis).